The chain runs to 442 residues: D-serine dehydratase (442 aa).

At K118 the chain carries N6-(pyridoxal phosphate)lysine.

It belongs to the serine/threonine dehydratase family. DsdA subfamily. As to quaternary structure, monomer. Pyridoxal 5'-phosphate is required as a cofactor.

The enzyme catalyses D-serine = pyruvate + NH4(+). This Escherichia fergusonii (strain ATCC 35469 / DSM 13698 / CCUG 18766 / IAM 14443 / JCM 21226 / LMG 7866 / NBRC 102419 / NCTC 12128 / CDC 0568-73) protein is D-serine dehydratase.